Here is a 73-residue protein sequence, read N- to C-terminus: Large ribosomal subunit protein uL29 (73 aa).

The protein belongs to the universal ribosomal protein uL29 family.

The protein is Large ribosomal subunit protein uL29 of Synechococcus sp. (strain JA-2-3B'a(2-13)) (Cyanobacteria bacterium Yellowstone B-Prime).